The primary structure comprises 409 residues: LL-diaminopimelate aminotransferase (409 aa).

Substrate contacts are provided by tyrosine 15 and glycine 42. Pyridoxal 5'-phosphate-binding positions include tyrosine 72, 108-109 (AK), tyrosine 132, asparagine 186, tyrosine 217, and 245-247 (SFS). Substrate contacts are provided by lysine 109, tyrosine 132, and asparagine 186. Lysine 248 carries the post-translational modification N6-(pyridoxal phosphate)lysine. Pyridoxal 5'-phosphate-binding residues include arginine 256 and asparagine 291. Substrate-binding residues include asparagine 291 and arginine 385.

Belongs to the class-I pyridoxal-phosphate-dependent aminotransferase family. LL-diaminopimelate aminotransferase subfamily. Homodimer. Requires pyridoxal 5'-phosphate as cofactor.

It catalyses the reaction (2S,6S)-2,6-diaminopimelate + 2-oxoglutarate = (S)-2,3,4,5-tetrahydrodipicolinate + L-glutamate + H2O + H(+). It functions in the pathway amino-acid biosynthesis; L-lysine biosynthesis via DAP pathway; LL-2,6-diaminopimelate from (S)-tetrahydrodipicolinate (aminotransferase route): step 1/1. Involved in the synthesis of meso-diaminopimelate (m-DAP or DL-DAP), required for both lysine and peptidoglycan biosynthesis. Catalyzes the direct conversion of tetrahydrodipicolinate to LL-diaminopimelate. The chain is LL-diaminopimelate aminotransferase from Desulfosudis oleivorans (strain DSM 6200 / JCM 39069 / Hxd3) (Desulfococcus oleovorans).